The following is a 654-amino-acid chain: Fructose-1,6-bisphosphatase class 3 (654 aa).

Residues N288–E307 are disordered. A compositionally biased stretch (basic and acidic residues) spans D298–E307.

Belongs to the FBPase class 3 family. It depends on Mn(2+) as a cofactor.

It carries out the reaction beta-D-fructose 1,6-bisphosphate + H2O = beta-D-fructose 6-phosphate + phosphate. It participates in carbohydrate biosynthesis; gluconeogenesis. In Staphylococcus aureus (strain USA300), this protein is Fructose-1,6-bisphosphatase class 3.